A 378-amino-acid polypeptide reads, in one-letter code: UPF0754 membrane protein BCQ_0944 (378 aa).

A run of 2 helical transmembrane segments spans residues 1-21 (MNIW…GGFT) and 357-377 (YLGA…LLFL).

Belongs to the UPF0754 family.

It is found in the cell membrane. This chain is UPF0754 membrane protein BCQ_0944, found in Bacillus cereus (strain Q1).